We begin with the raw amino-acid sequence, 1101 residues long: ATP-dependent DNA helicase mph1 (1101 aa).

Disordered stretches follow at residues 22-59, 95-138, 154-231, and 250-270; these read PGTS…SPDR, LTQP…QYHD, FEEE…TNRP, and SSQR…PTHH. The segment covering 24–48 has biased composition (polar residues); the sequence is TSDTVESVQTNNRPAKQSDISISQG. Positions 170–190 are enriched in low complexity; that stretch reads TPARTAAAPCAAPKGTAADVP. Positions 191-202 are enriched in acidic residues; sequence FDLDDIPDDAFD. The span at 209–228 shows a compositional bias: polar residues; that stretch reads PPRSTSQATRGPPVQSQFRT. The Helicase ATP-binding domain occupies 296 to 464; sequence IAQRGLFHNL…AIIDDLGIAK (169 aa). 309–316 contacts ATP; it reads LPTGLGKT. Residues 412 to 415 carry the DEAH box motif; that stretch reads DEAH. Residues 634–808 form the Helicase C-terminal domain; sequence YLKQVVLNHF…GTRFTFHDDK (175 aa). Disordered stretches follow at residues 824 to 890 and 991 to 1067; these read RQID…PTPE and SRDP…QDAF. Residues 842–854 are compositionally biased toward basic residues; the sequence is RRARPPKRPPKKF.

It belongs to the DEAD box helicase family. DEAH subfamily. FANCM sub-subfamily. In terms of assembly, interacts with the MHF histone-fold complex to form the FANCM-MHF complex.

Its subcellular location is the nucleus. It carries out the reaction ATP + H2O = ADP + phosphate + H(+). Its function is as follows. ATP-dependent DNA helicase involved in DNA damage repair by homologous recombination and in genome maintenance. Capable of unwinding D-loops. Plays a role in limiting crossover recombinants during mitotic DNA double-strand break (DSB) repair. Component of a FANCM-MHF complex which promotes gene conversion at blocked replication forks, probably by reversal of the stalled fork. This Aspergillus fumigatus (strain CBS 144.89 / FGSC A1163 / CEA10) (Neosartorya fumigata) protein is ATP-dependent DNA helicase mph1.